The primary structure comprises 245 residues: Zinc finger protein 575 (245 aa).

The segment at M1–D67 is disordered. Over residues P36–S49 the composition is skewed to low complexity. Residues R52 to H63 are compositionally biased toward basic residues. 6 C2H2-type zinc fingers span residues H63–H85, H91–H113, H119–H141, Y147–H169, Y177–H199, and H213–H240.

Belongs to the krueppel C2H2-type zinc-finger protein family.

The protein localises to the nucleus. Functionally, may be involved in transcriptional regulation. The polypeptide is Zinc finger protein 575 (ZNF575) (Homo sapiens (Human)).